The chain runs to 204 residues: Glycerol-3-phosphate acyltransferase (204 aa).

5 helical membrane-spanning segments follow: residues 8–28 (ILIFAYLLGSINSAIIVCYIF), 53–73 (VLAAITLIFDILKGLVPVVIA), 81–101 (FITACTALYAILGHIFPIFFG), 116–136 (FGFSWILGLIFVITWLCVAII), and 155–175 (VIFTSDLQVAAPFLIIAIIIL).

The protein belongs to the PlsY family. In terms of assembly, probably interacts with PlsX.

It is found in the cell inner membrane. It catalyses the reaction an acyl phosphate + sn-glycerol 3-phosphate = a 1-acyl-sn-glycero-3-phosphate + phosphate. It functions in the pathway lipid metabolism; phospholipid metabolism. Functionally, catalyzes the transfer of an acyl group from acyl-phosphate (acyl-PO(4)) to glycerol-3-phosphate (G3P) to form lysophosphatidic acid (LPA). This enzyme utilizes acyl-phosphate as fatty acyl donor, but not acyl-CoA or acyl-ACP. This Francisella tularensis subsp. holarctica (strain OSU18) protein is Glycerol-3-phosphate acyltransferase.